The sequence spans 321 residues: Cytochrome f (321 aa).

The signal sequence occupies residues 1–38; it reads MKKNFYTISKTMSRSLKLILFSVFIGFSIFLIPQPTWA. Tyr39, Cys59, Cys62, and His63 together coordinate heme. Residues 288–308 form a helical membrane-spanning segment; the sequence is VIGMIIFFIGVGLSQIMLVLK.

Belongs to the cytochrome f family. In terms of assembly, the 4 large subunits of the cytochrome b6-f complex are cytochrome b6, subunit IV (17 kDa polypeptide, PetD), cytochrome f and the Rieske protein, while the 4 small subunits are PetG, PetL, PetM and PetN. The complex functions as a dimer. Heme is required as a cofactor.

Its subcellular location is the cellular thylakoid membrane. In terms of biological role, component of the cytochrome b6-f complex, which mediates electron transfer between photosystem II (PSII) and photosystem I (PSI), cyclic electron flow around PSI, and state transitions. The polypeptide is Cytochrome f (Prochlorococcus marinus (strain NATL1A)).